The chain runs to 29 residues: HSEGTFSSDYSKYLDSRRAKDFVQWLMST.

Belongs to the glucagon family.

Its subcellular location is the secreted. In terms of biological role, glucagon plays a key role in glucose metabolism and homeostasis. Regulates blood glucose by increasing gluconeogenesis and decreasing glycolysis. This Callorhinchus milii (Ghost shark) protein is Glucagon (gcg).